The chain runs to 81 residues: Large ribosomal subunit protein bL31B (81 aa).

This sequence belongs to the bacterial ribosomal protein bL31 family. Type B subfamily. Part of the 50S ribosomal subunit.

The chain is Large ribosomal subunit protein bL31B from Listeria innocua serovar 6a (strain ATCC BAA-680 / CLIP 11262).